A 142-amino-acid chain; its full sequence is Hemoglobin subunit alpha (142 aa).

The region spanning 2–142 is the Globin domain; sequence KLSAEDKHNV…VGHVLTSKYR (141 aa). An O2-binding site is contributed by H59. A heme b-binding site is contributed by H88.

Belongs to the globin family. In terms of assembly, heterotetramer of two alpha chains and two beta chains. As to expression, red blood cells.

Involved in oxygen transport from the lung to the various peripheral tissues. The polypeptide is Hemoglobin subunit alpha (HBA) (Taricha granulosa (Roughskin newt)).